Reading from the N-terminus, the 515-residue chain is Maturase K (515 aa).

Belongs to the intron maturase 2 family. MatK subfamily.

The protein localises to the plastid. It is found in the chloroplast. Functionally, usually encoded in the trnK tRNA gene intron. Probably assists in splicing its own and other chloroplast group II introns. The protein is Maturase K of Pinus cembra (Swiss stone pine).